The sequence spans 120 residues: Large ribosomal subunit protein uL22 (120 aa).

It belongs to the universal ribosomal protein uL22 family. Part of the 50S ribosomal subunit.

Its function is as follows. This protein binds specifically to 23S rRNA; its binding is stimulated by other ribosomal proteins, e.g. L4, L17, and L20. It is important during the early stages of 50S assembly. It makes multiple contacts with different domains of the 23S rRNA in the assembled 50S subunit and ribosome. In terms of biological role, the globular domain of the protein is located near the polypeptide exit tunnel on the outside of the subunit, while an extended beta-hairpin is found that lines the wall of the exit tunnel in the center of the 70S ribosome. This is Large ribosomal subunit protein uL22 from Oenococcus oeni (strain ATCC BAA-331 / PSU-1).